We begin with the raw amino-acid sequence, 251 residues long: Probable transcriptional regulatory protein MLBr00475 (251 aa).

It belongs to the TACO1 family.

Its subcellular location is the cytoplasm. The polypeptide is Probable transcriptional regulatory protein MLBr00475 (Mycobacterium leprae (strain Br4923)).